Here is a 126-residue protein sequence, read N- to C-terminus: Aspartate 1-decarboxylase (126 aa).

Serine 25 (schiff-base intermediate with substrate; via pyruvic acid) is an active-site residue. Serine 25 carries the post-translational modification Pyruvic acid (Ser). Threonine 57 is a binding site for substrate. Catalysis depends on tyrosine 58, which acts as the Proton donor. 73–75 (GAA) is a binding site for substrate.

Belongs to the PanD family. Heterooctamer of four alpha and four beta subunits. The cofactor is pyruvate. In terms of processing, is synthesized initially as an inactive proenzyme, which is activated by self-cleavage at a specific serine bond to produce a beta-subunit with a hydroxyl group at its C-terminus and an alpha-subunit with a pyruvoyl group at its N-terminus.

It localises to the cytoplasm. The catalysed reaction is L-aspartate + H(+) = beta-alanine + CO2. The protein operates within cofactor biosynthesis; (R)-pantothenate biosynthesis; beta-alanine from L-aspartate: step 1/1. Functionally, catalyzes the pyruvoyl-dependent decarboxylation of aspartate to produce beta-alanine. The polypeptide is Aspartate 1-decarboxylase (Azotobacter vinelandii (strain DJ / ATCC BAA-1303)).